The sequence spans 454 residues: Glutamine synthetase (454 aa).

A GS beta-grasp domain is found at 19 to 111; the sequence is NNVKFIRFQF…VICDVYKDEK (93 aa). A GS catalytic domain is found at 118-454; it reads PRSRLKAILE…DWETGKYLIY (337 aa). Mg(2+) contacts are provided by Glu142 and Glu144. Glu194 provides a ligand contact to ATP. Glu199 and Glu206 together coordinate Mg(2+). Residues 250 to 251 and Gly251 each bind L-glutamate; that span reads NG. His255 contributes to the Mg(2+) binding site. Residues 257 to 259 and Ser259 each bind ATP; that span reads HQS. L-glutamate contacts are provided by Arg309, Glu315, and Arg327. ATP is bound by residues Arg327, Arg332, and Lys339. Glu344 is a binding site for Mg(2+). Arg346 contacts L-glutamate.

The protein belongs to the glutamine synthetase family. Oligomer of 12 subunits arranged in the form of two hexagons. Mg(2+) serves as cofactor.

The protein localises to the cytoplasm. The catalysed reaction is L-glutamate + NH4(+) + ATP = L-glutamine + ADP + phosphate + H(+). Feedback inhibited by glycine and alanine, and inhibited by low concentrations of methionine sulfoximine. In terms of biological role, probably involved in nitrogen metabolism via ammonium assimilation. Catalyzes the ATP-dependent biosynthesis of glutamine from glutamate and ammonia. Beta-glutamate is a much poorer substrate than alpha-glutamate. The protein is Glutamine synthetase of Methanocaldococcus jannaschii (strain ATCC 43067 / DSM 2661 / JAL-1 / JCM 10045 / NBRC 100440) (Methanococcus jannaschii).